The sequence spans 200 residues: Lipopolysaccharide core heptose(II)-phosphate phosphatase (200 aa).

Residues 1–25 form the signal peptide; it reads MLAFCRSSLKSKKYFIILLALAAIA.

The protein belongs to the phosphoglycerate mutase family. Ais subfamily.

Its subcellular location is the periplasm. The protein operates within bacterial outer membrane biogenesis; lipopolysaccharide metabolism. Functionally, catalyzes the dephosphorylation of heptose(II) of the outer membrane lipopolysaccharide core. This is Lipopolysaccharide core heptose(II)-phosphate phosphatase from Escherichia coli O157:H7 (strain EC4115 / EHEC).